Here is an 873-residue protein sequence, read N- to C-terminus: Bifunctional heparan sulfate N-deacetylase/N-sulfotransferase 3 (873 aa).

The Cytoplasmic segment spans residues 1 to 13; sequence MSFIMKLHRHFQR. Residues 14 to 34 traverse the membrane as a helical; Signal-anchor for type II membrane protein segment; that stretch reads TVILLATFCMVSIIISAYYLY. At 35 to 873 the chain is on the lumenal side; that stretch reads SGYKQENELS…WLRQELQKVR (839 aa). Residues 36–589 are heparan sulfate N-deacetylase 3; that stretch reads GYKQENELSE…KRHRDIWSKE (554 aa). Asparagine 146, asparagine 226, asparagine 342, and asparagine 392 each carry an N-linked (GlcNAc...) asparagine glycan. The segment at 590-873 is heparan sulfate N-sulfotransferase 3; the sequence is KTCDRLPKFL…WLRQELQKVR (284 aa). The For sulfotransferase activity role is filled by lysine 605. Residue 605–609 coordinates 3'-phosphoadenylyl sulfate; that stretch reads KTGTT. Asparagine 658 is a glycosylation site (N-linked (GlcNAc...) asparagine). Position 703 (serine 703) interacts with 3'-phosphoadenylyl sulfate. Asparagine 794 carries an N-linked (GlcNAc...) asparagine glycan. Cysteine 809 and cysteine 819 form a disulfide bridge. Residue 824 to 828 coordinates 3'-phosphoadenylyl sulfate; sequence KGRKY.

It belongs to the sulfotransferase 1 family. NDST subfamily. Monomer. Expressed in brain, kidney, liver, fetal and adult lung, adult pancreas, placenta, fetal spleen and fetal thymus. Not detected in adult/ fetal heart and skeletal muscle.

The protein localises to the golgi apparatus membrane. The enzyme catalyses alpha-D-glucosaminyl-[heparan sulfate](n) + 3'-phosphoadenylyl sulfate = N-sulfo-alpha-D-glucosaminyl-[heparan sulfate](n) + adenosine 3',5'-bisphosphate + 2 H(+). Its pathway is glycan metabolism; heparan sulfate biosynthesis. It functions in the pathway glycan metabolism; heparin biosynthesis. Essential bifunctional enzyme that catalyzes both the N-deacetylation and the N-sulfation of glucosamine (GlcNAc) of the glycosaminoglycan in heparan sulfate. Modifies the GlcNAc-GlcA disaccharide repeating sugar backbone to make N-sulfated heparosan, a prerequisite substrate for later modifications in heparin biosynthesis. Has high deacetylase activity but low sulfotransferase activity. This Homo sapiens (Human) protein is Bifunctional heparan sulfate N-deacetylase/N-sulfotransferase 3.